The chain runs to 562 residues: Ikaros family zinc finger protein (562 aa).

C2H2-type zinc fingers lie at residues 45 to 67, 73 to 95, and 101 to 123; these read IKCE…IRSH, FKCH…YKIH, and FQCP…MRIH. The segment at 129–152 adopts a C2H2-type 4; degenerate zinc-finger fold; it reads YRCSYCARSYKSRQSMKEHEYQCP. 4 disordered regions span residues 178–210, 293–342, 361–404, and 451–473; these read NPLA…PPYP, QNQQ…VKPT, QLED…KEDD, and DESK…STQD. Over residues 307-326 the composition is skewed to low complexity; sequence PSLSEATPSSHSSHSSAEDS. The segment covering 327–336 has biased composition (polar residues); the sequence is GQVNKFSPTE. A compositionally biased stretch (basic and acidic residues) spans 369–383; that stretch reads DSRKRPHSFESEPTP. Over residues 456-471 the composition is skewed to polar residues; sequence EISSVDSRSPLDQSST. 2 C2H2-type zinc fingers span residues 494–516 and 522–546; these read WECK…MGVH and LVCN…HHQH.

This sequence belongs to the Ikaros C2H2-type zinc-finger protein family. As to expression, expression is strongest in the anterior Fol cells of the oikoplastic epithelium.

It is found in the nucleus. The chain is Ikaros family zinc finger protein from Oikopleura dioica (Tunicate).